A 146-amino-acid chain; its full sequence is Deoxyuridine 5'-triphosphate nucleotidohydrolase (146 aa).

Residues 66-68 (RSG), Asn-79, 83-85 (TVD), and Lys-93 contribute to the substrate site.

This sequence belongs to the dUTPase family. The cofactor is Mg(2+).

It catalyses the reaction dUTP + H2O = dUMP + diphosphate + H(+). Its pathway is pyrimidine metabolism; dUMP biosynthesis; dUMP from dCTP (dUTP route): step 2/2. In terms of biological role, this enzyme is involved in nucleotide metabolism: it produces dUMP, the immediate precursor of thymidine nucleotides and it decreases the intracellular concentration of dUTP so that uracil cannot be incorporated into DNA. This chain is Deoxyuridine 5'-triphosphate nucleotidohydrolase, found in Fusobacterium nucleatum subsp. nucleatum (strain ATCC 25586 / DSM 15643 / BCRC 10681 / CIP 101130 / JCM 8532 / KCTC 2640 / LMG 13131 / VPI 4355).